A 97-amino-acid polypeptide reads, in one-letter code: Citrate lyase acyl carrier protein (97 aa).

An O-(phosphoribosyl dephospho-coenzyme A)serine modification is found at serine 14.

The protein belongs to the CitD family. Oligomer with a subunit composition of (alpha,beta,gamma)6.

The protein resides in the cytoplasm. In terms of biological role, covalent carrier of the coenzyme of citrate lyase. The polypeptide is Citrate lyase acyl carrier protein (Leuconostoc citreum (strain KM20)).